Reading from the N-terminus, the 227-residue chain is Cytidylate kinase (227 aa).

7 to 15 (GPSGAGKGT) lines the ATP pocket.

Belongs to the cytidylate kinase family. Type 1 subfamily.

The protein localises to the cytoplasm. The enzyme catalyses CMP + ATP = CDP + ADP. It carries out the reaction dCMP + ATP = dCDP + ADP. The protein is Cytidylate kinase of Actinobacillus succinogenes (strain ATCC 55618 / DSM 22257 / CCUG 43843 / 130Z).